Reading from the N-terminus, the 337-residue chain is D-alanine--D-alanine ligase (337 aa).

An ATP-grasp domain is found at 124-330 (KMWFSALGIP…FTEYLSLVIN (207 aa)). 154–209 (ALAQWGSIFVKAASQGSSVGCYKVDDSAKVAGVLKDAFGYAPYVIVEKTIKARELE) is a binding site for ATP. Positions 284, 297, and 299 each coordinate Mg(2+).

The protein belongs to the D-alanine--D-alanine ligase family. Mg(2+) is required as a cofactor. The cofactor is Mn(2+).

The protein localises to the cytoplasm. The enzyme catalyses 2 D-alanine + ATP = D-alanyl-D-alanine + ADP + phosphate + H(+). Its pathway is cell wall biogenesis; peptidoglycan biosynthesis. Cell wall formation. This chain is D-alanine--D-alanine ligase, found in Shewanella baltica (strain OS185).